A 476-amino-acid polypeptide reads, in one-letter code: Lactate utilization protein B (476 aa).

4Fe-4S ferredoxin-type domains lie at 304-334 (GTEF…GHSY) and 353-382 (YDDY…LHEL). [4Fe-4S] cluster is bound by residues C313, C316, C319, C323, C366, C369, and C373.

It belongs to the LutB/YkgF family.

Functionally, is involved in L-lactate degradation and allows cells to grow with lactate as the sole carbon source. Has probably a role as an electron transporter during oxidation of L-lactate. In Geobacillus thermodenitrificans (strain NG80-2), this protein is Lactate utilization protein B.